We begin with the raw amino-acid sequence, 268 residues long: Undecaprenyl-diphosphatase (268 aa).

The next 8 helical transmembrane spans lie at 3–23 (FFNLLEAAFLGLIEGLTEFIP), 46–66 (FEVLIQLGAILAILSVYSAKL), 84–104 (LGVLVAFLPAAVIGALAHGFI), 107–127 (VLFETPMLVCIMLIVGGFILL), 144–164 (YPLPICLAIGFIQCLAMIPGV), 185–205 (AEFSFFLAMPTMAGAFAYDLF), 213–233 (FNDGALIVVGFIMAFISGVFV), and 246–266 (FALFGWWRLIVGSAGMAALII).

This sequence belongs to the UppP family.

Its subcellular location is the cell inner membrane. It carries out the reaction di-trans,octa-cis-undecaprenyl diphosphate + H2O = di-trans,octa-cis-undecaprenyl phosphate + phosphate + H(+). Functionally, catalyzes the dephosphorylation of undecaprenyl diphosphate (UPP). Confers resistance to bacitracin. In Brucella abortus (strain S19), this protein is Undecaprenyl-diphosphatase.